Here is a 293-residue protein sequence, read N- to C-terminus: Cytosolic Fe-S cluster assembly factor CFD1 (293 aa).

Residue 25-32 (GKGGVGKS) participates in ATP binding. [4Fe-4S] cluster contacts are provided by Cys201 and Cys204. Ser291 is modified (phosphoserine).

This sequence belongs to the Mrp/NBP35 ATP-binding proteins family. NUBP2/CFD1 subfamily. As to quaternary structure, heterotetramer of 2 NBP35 and 2 CFD1 chains. The cofactor is [4Fe-4S] cluster.

Its subcellular location is the cytoplasm. Component of the cytosolic iron-sulfur (Fe/S) protein assembly (CIA) machinery. Required for maturation of extramitochondrial Fe-S proteins. The NBP35-CFD1 heterotetramer forms a Fe-S scaffold complex, mediating the de novo assembly of an Fe-S cluster and its transfer to target apoproteins. Nucleotide binding/hydrolysis seems to be critcal for loading of Fe-S clusters onto CFD1 and NBP35. Required for biogenesis and export of both ribosomal subunits, which may reflect a role in assembly of the Fe/S clusters in RLI1, a protein which performs rRNA processing and ribosome export. This Saccharomyces cerevisiae (strain ATCC 204508 / S288c) (Baker's yeast) protein is Cytosolic Fe-S cluster assembly factor CFD1.